The primary structure comprises 1375 residues: DNA-directed RNA polymerase subunit beta (1375 aa).

The protein belongs to the RNA polymerase beta chain family. As to quaternary structure, the RNAP catalytic core consists of 2 alpha, 1 beta, 1 beta' and 1 omega subunit. When a sigma factor is associated with the core the holoenzyme is formed, which can initiate transcription.

It catalyses the reaction RNA(n) + a ribonucleoside 5'-triphosphate = RNA(n+1) + diphosphate. In terms of biological role, DNA-dependent RNA polymerase catalyzes the transcription of DNA into RNA using the four ribonucleoside triphosphates as substrates. In Coxiella burnetii (strain CbuG_Q212) (Coxiella burnetii (strain Q212)), this protein is DNA-directed RNA polymerase subunit beta.